The following is a 236-amino-acid chain: MQKTTLLHEGKAKKVFLTGDSDLVIQEFKDDATAFNNKKKGTIADKGVVNNAISCKLFTMLESHGVKTHLVEKLSERDMLCRRLDIIKVEVVVRNIAAGSLVKRYGFAEGTVLDKPIVEFYLKDDDLDDPLMNESHAVALGVATLEELSVLRDRAEAINVVLKEFFAQRKLKLVDFKLEFGRYHNEILLGDEISPDTCRFWDLDTNEKMDKDRFRFDLGGVEDAYGEVQRRVLEQD.

This sequence belongs to the SAICAR synthetase family.

The enzyme catalyses 5-amino-1-(5-phospho-D-ribosyl)imidazole-4-carboxylate + L-aspartate + ATP = (2S)-2-[5-amino-1-(5-phospho-beta-D-ribosyl)imidazole-4-carboxamido]succinate + ADP + phosphate + 2 H(+). Its pathway is purine metabolism; IMP biosynthesis via de novo pathway; 5-amino-1-(5-phospho-D-ribosyl)imidazole-4-carboxamide from 5-amino-1-(5-phospho-D-ribosyl)imidazole-4-carboxylate: step 1/2. The chain is Phosphoribosylaminoimidazole-succinocarboxamide synthase from Chlorobium limicola (strain DSM 245 / NBRC 103803 / 6330).